Here is an 82-residue protein sequence, read N- to C-terminus: Diphthamide biosynthesis protein 3 (82 aa).

The region spanning 4 to 60 is the DPH-type MB domain; it reads FHDEVEIEDFQYDEDSETYFYPCPCGDNFAITKEDLENGEDVATCPSCSLIIKVIYD. The Fe cation site is built by Cys-26, Cys-28, Cys-48, and Cys-51.

This sequence belongs to the DPH3 family. In terms of assembly, component of the 2-(3-amino-3-carboxypropyl)histidine synthase complex composed of DPH1, DPH2, DPH3 and a NADH-dependent reductase. Interacts with SERGEF. The cofactor is Fe(2+). As to expression, widely expressed with highest levels in heart, liver, kidney and testis.

The protein resides in the cytoplasm. It is found in the nucleus. It catalyses the reaction [3Fe-4S](1+)-[protein] + Fe(2+)-[Dph3] = [3Fe-4S](0)-[protein] + Fe(3+)-[Dph3]. It carries out the reaction 2 [3Fe-4S](0)-[protein] + 2 Fe(2+)-[Dph3] + NADH = 2 [4Fe-4S](1+)-[protein] + 2 [Dph3] + NAD(+) + H(+). Its pathway is protein modification; peptidyl-diphthamide biosynthesis. In terms of biological role, required for the first step of diphthamide biosynthesis, a post-translational modification of histidine which occurs in elongation factor 2. DPH1 and DPH2 transfer a 3-amino-3-carboxypropyl (ACP) group from S-adenosyl-L-methionine (SAM) to a histidine residue, the reaction is assisted by a reduction system comprising DPH3 and a NADH-dependent reductase. Acts as an electron donor to reduce the Fe-S cluster in DPH1-DPH2 keeping the [4Fe-4S] clusters in the active and reduced state. Restores iron to DPH1-DPH2 iron-sulfur clusters which have degraded from [4Fe-4S] to [3Fe-4S] by donating an iron atom to reform [4Fe-4S] clusters, in a manner dependent on the presence of elongation factor 2 and SAM. Associates with the elongator complex and is required for tRNA Wobble base modifications mediated by the elongator complex. The elongator complex is required for multiple tRNA modifications, including mcm5U (5-methoxycarbonylmethyl uridine), mcm5s 2U (5-methoxycarbonylmethyl-2-thiouridine), and ncm5U (5-carbamoylmethyl uridine). This Mus musculus (Mouse) protein is Diphthamide biosynthesis protein 3.